Reading from the N-terminus, the 518-residue chain is ATP synthase subunit beta 2 (518 aa).

154 to 161 (GGAGVGKT) is a binding site for ATP. Residues 455 to 518 (IDEAKGKAKP…TDHAADTHES (64 aa)) form a disordered region. 2 stretches are compositionally biased toward basic and acidic residues: residues 473-485 (PDSK…DPKP) and 507-518 (PETDHAADTHES).

Belongs to the ATPase alpha/beta chains family. F-type ATPases have 2 components, CF(1) - the catalytic core - and CF(0) - the membrane proton channel. CF(1) has five subunits: alpha(3), beta(3), gamma(1), delta(1), epsilon(1). CF(0) has three main subunits: a(1), b(2) and c(9-12). The alpha and beta chains form an alternating ring which encloses part of the gamma chain. CF(1) is attached to CF(0) by a central stalk formed by the gamma and epsilon chains, while a peripheral stalk is formed by the delta and b chains.

The protein resides in the cell inner membrane. It carries out the reaction ATP + H2O + 4 H(+)(in) = ADP + phosphate + 5 H(+)(out). Produces ATP from ADP in the presence of a proton gradient across the membrane. The catalytic sites are hosted primarily by the beta subunits. In Albidiferax ferrireducens (strain ATCC BAA-621 / DSM 15236 / T118) (Rhodoferax ferrireducens), this protein is ATP synthase subunit beta 2.